Reading from the N-terminus, the 239-residue chain is tRNA (guanine-N(7)-)-methyltransferase (239 aa).

The span at 1–13 shows a compositional bias: polar residues; it reads MEAEVQQGQQSPE. A disordered region spans residues 1-30; it reads MEAEVQQGQQSPEGQLEKRPPSPPWAGIPL. Residues Asp-72, Glu-97, Asn-124, and Asp-147 each contribute to the S-adenosyl-L-methionine site. Asp-147 is a catalytic residue. Residues Lys-151 and Asp-183 each coordinate substrate.

The protein belongs to the class I-like SAM-binding methyltransferase superfamily. TrmB family.

It catalyses the reaction guanosine(46) in tRNA + S-adenosyl-L-methionine = N(7)-methylguanosine(46) in tRNA + S-adenosyl-L-homocysteine. It participates in tRNA modification; N(7)-methylguanine-tRNA biosynthesis. Catalyzes the formation of N(7)-methylguanine at position 46 (m7G46) in tRNA. The sequence is that of tRNA (guanine-N(7)-)-methyltransferase from Synechococcus sp. (strain JA-2-3B'a(2-13)) (Cyanobacteria bacterium Yellowstone B-Prime).